The following is a 156-amino-acid chain: ATP synthase subunit b 2 (156 aa).

A helical transmembrane segment spans residues 6 to 26 (SMFGQAISFVIFVWLCMKYVW).

This sequence belongs to the ATPase B chain family. As to quaternary structure, F-type ATPases have 2 components, F(1) - the catalytic core - and F(0) - the membrane proton channel. F(1) has five subunits: alpha(3), beta(3), gamma(1), delta(1), epsilon(1). F(0) has three main subunits: a(1), b(2) and c(10-14). The alpha and beta chains form an alternating ring which encloses part of the gamma chain. F(1) is attached to F(0) by a central stalk formed by the gamma and epsilon chains, while a peripheral stalk is formed by the delta and b chains.

Its subcellular location is the cell inner membrane. Functionally, f(1)F(0) ATP synthase produces ATP from ADP in the presence of a proton or sodium gradient. F-type ATPases consist of two structural domains, F(1) containing the extramembraneous catalytic core and F(0) containing the membrane proton channel, linked together by a central stalk and a peripheral stalk. During catalysis, ATP synthesis in the catalytic domain of F(1) is coupled via a rotary mechanism of the central stalk subunits to proton translocation. Its function is as follows. Component of the F(0) channel, it forms part of the peripheral stalk, linking F(1) to F(0). The sequence is that of ATP synthase subunit b 2 from Vibrio campbellii (strain ATCC BAA-1116).